Consider the following 375-residue polypeptide: Queuine tRNA-ribosyltransferase (375 aa).

D89 (proton acceptor) is an active-site residue. Residues 89–93 (DSGGF), D143, Q187, and G214 contribute to the substrate site. The tract at residues 245 to 251 (GVGKPED) is RNA binding. D264 (nucleophile) is an active-site residue. Residues 269–273 (TRNAR) are RNA binding; important for wobble base 34 recognition. Zn(2+) contacts are provided by C302, C304, C307, and H333.

This sequence belongs to the queuine tRNA-ribosyltransferase family. As to quaternary structure, homodimer. Within each dimer, one monomer is responsible for RNA recognition and catalysis, while the other monomer binds to the replacement base PreQ1. Zn(2+) is required as a cofactor.

The enzyme catalyses 7-aminomethyl-7-carbaguanine + guanosine(34) in tRNA = 7-aminomethyl-7-carbaguanosine(34) in tRNA + guanine. It functions in the pathway tRNA modification; tRNA-queuosine biosynthesis. Functionally, catalyzes the base-exchange of a guanine (G) residue with the queuine precursor 7-aminomethyl-7-deazaguanine (PreQ1) at position 34 (anticodon wobble position) in tRNAs with GU(N) anticodons (tRNA-Asp, -Asn, -His and -Tyr). Catalysis occurs through a double-displacement mechanism. The nucleophile active site attacks the C1' of nucleotide 34 to detach the guanine base from the RNA, forming a covalent enzyme-RNA intermediate. The proton acceptor active site deprotonates the incoming PreQ1, allowing a nucleophilic attack on the C1' of the ribose to form the product. After dissociation, two additional enzymatic reactions on the tRNA convert PreQ1 to queuine (Q), resulting in the hypermodified nucleoside queuosine (7-(((4,5-cis-dihydroxy-2-cyclopenten-1-yl)amino)methyl)-7-deazaguanosine). The chain is Queuine tRNA-ribosyltransferase from Escherichia coli O81 (strain ED1a).